We begin with the raw amino-acid sequence, 142 residues long: Photosystem II extrinsic protein U (142 aa).

Residues 1-29 form the signal peptide; the sequence is MKGLVRLLTVFSLLLGCWGWLGTTQIAQA.

This sequence belongs to the PsbU family. PSII is composed of 1 copy each of membrane proteins PsbA, PsbB, PsbC, PsbD, PsbE, PsbF, PsbH, PsbI, PsbJ, PsbK, PsbL, PsbM, PsbT, PsbX, PsbY, PsbZ, Psb30/Ycf12, peripheral proteins PsbO, CyanoQ (PsbQ), PsbU, PsbV and a large number of cofactors. It forms dimeric complexes.

Its subcellular location is the cellular thylakoid membrane. Its function is as follows. One of the extrinsic, lumenal subunits of photosystem II (PSII). PSII is a light-driven water plastoquinone oxidoreductase, using light energy to abstract electrons from H(2)O, generating a proton gradient subsequently used for ATP formation. The extrinsic proteins stabilize the structure of photosystem II oxygen-evolving complex (OEC), the ion environment of oxygen evolution and protect the OEC against heat-induced inactivation. The polypeptide is Photosystem II extrinsic protein U (Trichormus variabilis (strain ATCC 29413 / PCC 7937) (Anabaena variabilis)).